Consider the following 220-residue polypeptide: Botcinic acid biosynthesis cluster B protein 12 (220 aa).

The protein operates within polyketide biosynthesis. Part of the gene cluster B that mediates the biosynthesis of botcinic acid and its botcinin derivatives, acetate-derived polyketides that contribute to virulence when combined with the sesquiterpene botrydial. Botcinic acid and its derivatives have been shown to induce chlorosis and necrosis during host plant infection, but also have antifungal activities. Two polyketide synthases, BOA6 and BOA9, are involved in the biosynthesis of botcinins. BOA6 mediates the formation of the per-methylated tetraketide core by condensation of four units of malonyl-CoA with one unit of acetyl-CoA, which would be methylated in activated methylene groups to yield a bicyclic acid intermediate that could then either be converted to botrylactone derivatives or lose the starter acetate unit through a retro-Claisen type C-C bond cleavage to yield botcinin derivatives. The second polyketide synthase, BOA9, is probably required for the biosynthesis of the tetraketide side chain of botcinins. The methyltransferase (MT) domain within BOA6 is probably responsible for the incorporation of four methyl groups. The trans-enoyl reductase BOA5 might take over the enoyl reductase function of BOA6 that misses an ER domain. The monooxygenases BOA2, BOA3 and BOA4 might be involved in further hydroxylations at C4, C5 and C8, whereas BOA7, close to BOA9, could potentially be involved in the hydroxylation at C4 in the side chain of botcinins. In Botryotinia fuckeliana (strain B05.10) (Noble rot fungus), this protein is Botcinic acid biosynthesis cluster B protein 12.